We begin with the raw amino-acid sequence, 299 residues long: Phosphoribosylaminoimidazole-succinocarboxamide synthase (299 aa).

The protein belongs to the SAICAR synthetase family.

It catalyses the reaction 5-amino-1-(5-phospho-D-ribosyl)imidazole-4-carboxylate + L-aspartate + ATP = (2S)-2-[5-amino-1-(5-phospho-beta-D-ribosyl)imidazole-4-carboxamido]succinate + ADP + phosphate + 2 H(+). It participates in purine metabolism; IMP biosynthesis via de novo pathway; 5-amino-1-(5-phospho-D-ribosyl)imidazole-4-carboxamide from 5-amino-1-(5-phospho-D-ribosyl)imidazole-4-carboxylate: step 1/2. In Maridesulfovibrio salexigens (strain ATCC 14822 / DSM 2638 / NCIMB 8403 / VKM B-1763) (Desulfovibrio salexigens), this protein is Phosphoribosylaminoimidazole-succinocarboxamide synthase.